Here is a 103-residue protein sequence, read N- to C-terminus: N(4)-acetylcytidine amidohydrolase (103 aa).

The ASCH domain occupies 6–101; that stretch reads ITFFQRFQDD…QIQFYVIEFK (96 aa). K21 serves as the catalytic Proton acceptor. T24 functions as the Nucleophile in the catalytic mechanism. E74 acts as the Proton donor in catalysis.

This sequence belongs to the N(4)-acetylcytidine amidohydrolase family.

It catalyses the reaction N(4)-acetylcytidine + H2O = cytidine + acetate + H(+). The enzyme catalyses N(4)-acetyl-2'-deoxycytidine + H2O = 2'-deoxycytidine + acetate + H(+). It carries out the reaction N(4)-acetylcytosine + H2O = cytosine + acetate + H(+). Its function is as follows. Catalyzes the hydrolysis of N(4)-acetylcytidine (ac4C). The chain is N(4)-acetylcytidine amidohydrolase (yqfB) from Escherichia coli (strain SMS-3-5 / SECEC).